The following is a 128-amino-acid chain: Sirohydrochlorin cobaltochelatase (128 aa).

His-9 functions as the Proton acceptor in the catalytic mechanism. His-9 serves as a coordination point for Co(2+). Residues Lys-43 and 68–73 (FATGTH) contribute to the substrate site. His-73 contacts Co(2+).

Belongs to the CbiX family. CbiXS subfamily. As to quaternary structure, homotetramer; dimer of dimers.

It carries out the reaction Co-sirohydrochlorin + 2 H(+) = sirohydrochlorin + Co(2+). It participates in cofactor biosynthesis; adenosylcobalamin biosynthesis; cob(II)yrinate a,c-diamide from sirohydrochlorin (anaerobic route): step 1/10. Functionally, catalyzes the insertion of Co(2+) into sirohydrochlorin as part of the anaerobic pathway to cobalamin biosynthesis. In Saccharolobus solfataricus (strain ATCC 35092 / DSM 1617 / JCM 11322 / P2) (Sulfolobus solfataricus), this protein is Sirohydrochlorin cobaltochelatase.